We begin with the raw amino-acid sequence, 184 residues long: Photosystem I assembly protein Ycf4 (184 aa).

The next 2 membrane-spanning stretches (helical) occupy residues 19–39 (ISNF…LLVG) and 57–77 (IVFF…LFIS).

This sequence belongs to the Ycf4 family.

The protein localises to the plastid. Its subcellular location is the chloroplast thylakoid membrane. Functionally, seems to be required for the assembly of the photosystem I complex. In Atropa belladonna (Belladonna), this protein is Photosystem I assembly protein Ycf4.